The sequence spans 325 residues: GMP reductase (325 aa).

C174 functions as the Thioimidate intermediate in the catalytic mechanism. Residue I203–V226 coordinates NADP(+).

It belongs to the IMPDH/GMPR family. GuaC type 2 subfamily.

The enzyme catalyses IMP + NH4(+) + NADP(+) = GMP + NADPH + 2 H(+). Catalyzes the irreversible NADPH-dependent deamination of GMP to IMP. It functions in the conversion of nucleobase, nucleoside and nucleotide derivatives of G to A nucleotides, and in maintaining the intracellular balance of A and G nucleotides. The protein is GMP reductase of Helicobacter pylori (strain G27).